Reading from the N-terminus, the 267-residue chain is Hemin import ATP-binding protein HmuV (267 aa).

The ABC transporter domain maps to Leu-3 to Arg-243. Position 35-42 (Gly-35–Ser-42) interacts with ATP.

It belongs to the ABC transporter superfamily. Heme (hemin) importer (TC 3.A.1.14.5) family. As to quaternary structure, the complex is composed of two ATP-binding proteins (HmuV), two transmembrane proteins (HmuU) and a solute-binding protein (HmuT).

It localises to the cell inner membrane. In terms of biological role, part of the ABC transporter complex HmuTUV involved in hemin import. Responsible for energy coupling to the transport system. The sequence is that of Hemin import ATP-binding protein HmuV from Myxococcus xanthus (strain DK1622).